A 164-amino-acid polypeptide reads, in one-letter code: MLCVRSSSSNLESDTYLSRYSTRASAGTGSTYGFGLAGDRGYSSDSSSSSSESKPSNNKNIDFIYNNNAESNLSEYLGKDIPEDLSGFRDTASAPDTQSDVRNCDSIRKYQSLSSAGSGSTYGYGAGGNRGFMDESNESPKEDYINQKKHSKLFLLLYRIFHLI.

The segment covering 1–29 has biased composition (polar residues); it reads MLCVRSSSSNLESDTYLSRYSTRASAGTG. Positions 1–62 are disordered; the sequence is MLCVRSSSSN…SKPSNNKNID (62 aa). Over residues 43 to 62 the composition is skewed to low complexity; that stretch reads SSDSSSSSSESKPSNNKNID.

This is an uncharacterized protein from Schizosaccharomyces pombe (strain 972 / ATCC 24843) (Fission yeast).